Consider the following 249-residue polypeptide: Carbohydrate deacetylase (249 aa).

Positions 60 and 125 each coordinate Mg(2+).

Belongs to the YdjC deacetylase family. As to quaternary structure, homodimer. Mg(2+) is required as a cofactor.

Probably catalyzes the deacetylation of acetylated carbohydrates an important step in the degradation of oligosaccharides. The polypeptide is Carbohydrate deacetylase (Thermoanaerobacter pseudethanolicus (strain ATCC 33223 / 39E) (Clostridium thermohydrosulfuricum)).